Consider the following 594-residue polypeptide: CRISPR-associated DNA-binding protein Cas12m (594 aa).

The tract at residues 1–85 (MSRLEARTRY…EKVRQVMVFE (85 aa)) is recognition domain (REC1-N). The tract at residues 86 to 153 (SETTKKIKEL…ERSFIFEARK (68 aa)) is recognition domain (REC2). The interval 154–211 (QELAQLEKERWAVVKELGKGSGLYWCNLEDVVNSYDIGRKKAKAAGGEMRFHRWDGTG) is recognition domain (REC1-C). The tract at residues 212 to 314 (KVTVRFQKGL…RYKLNLVLEI (103 aa)) is wedge domain (WED). Positions 315–329 (LGENTNRILPALEGT) are linker. The segment at 330-540 (AAIDLGWRTV…KNHVEFTYVP (211 aa)) is ruvC-I. The target nucleic-acid binding (TNB) stretch occupies residues 541–575 (AENTTITCHKCGHKEKFDAAAQIIHTCSTCGELWD). Residues Cys548, Cys551, Cys567, and Cys570 each coordinate Zn(2+). A ruvC-II region spans residues 576 to 594 (QDYNAAKNLLAFSQKGGVK). A Mg(2+)-binding site is contributed by Asp577.

This sequence belongs to the CRISPR-associated DNA-binding protein Cas12m family. Mg(2+) serves as cofactor. The cofactor is Zn(2+).

Its function is as follows. CRISPR (clustered regularly interspaced short palindromic repeat), is an adaptive immune system that provides protection against mobile genetic elements (viruses, transposable elements and conjugative plasmids). CRISPR clusters contain sequences complementary to antecedent mobile elements and target invading nucleic acids. CRISPR clusters are transcribed and processed into CRISPR RNA (crRNA). Recognizes a short motif in the CRISPR repeat sequences (the 5' PAM or protospacer adjacent motif, 5'-C/TCN-3' in this organism) to help distinguish self versus nonself, as targets within the bacterial CRISPR locus do not have PAMs. Upon expression in E.coli as a CRISPR locus inhibits plasmid propagation when targeted to regions essential for plasmid propagation (replication origin but not a selectable marker), probably by inhibiting transcription. Cas12m-crRNA binds DNA in a PAM-dependent, crRNA-guided fashion. Upon expression in E.coli as a CRISPR region preferentially binds to its associated crRNA. Probably required for pre-crRNA processing to mature crRNA. The sequence is that of CRISPR-associated DNA-binding protein Cas12m from Thermanaerosceptrum fracticalcis.